Here is a 469-residue protein sequence, read N- to C-terminus: Sulfate adenylyltransferase subunit 1 (469 aa).

Residues 22–236 (KDMLRFLTCG…TLENIEIGND (215 aa)) enclose the tr-type G domain. The interval 31-38 (GSVDDGKS) is G1. 31–38 (GSVDDGKS) contributes to the GTP binding site. A G2 region spans residues 89–93 (GITID). A G3 region spans residues 110–113 (DTPG). GTP is bound by residues 110–114 (DTPGH) and 165–168 (NKMD). The interval 165 to 168 (NKMD) is G4. Residues 202-204 (SAL) form a G5 region.

It belongs to the TRAFAC class translation factor GTPase superfamily. Classic translation factor GTPase family. CysN/NodQ subfamily. Heterodimer composed of CysD, the smaller subunit, and CysN.

The catalysed reaction is sulfate + ATP + H(+) = adenosine 5'-phosphosulfate + diphosphate. The protein operates within sulfur metabolism; hydrogen sulfide biosynthesis; sulfite from sulfate: step 1/3. Its function is as follows. With CysD forms the ATP sulfurylase (ATPS) that catalyzes the adenylation of sulfate producing adenosine 5'-phosphosulfate (APS) and diphosphate, the first enzymatic step in sulfur assimilation pathway. APS synthesis involves the formation of a high-energy phosphoric-sulfuric acid anhydride bond driven by GTP hydrolysis by CysN coupled to ATP hydrolysis by CysD. The polypeptide is Sulfate adenylyltransferase subunit 1 (Pseudoalteromonas atlantica (strain T6c / ATCC BAA-1087)).